Reading from the N-terminus, the 57-residue chain is UPF0391 membrane protein AZOSEA39630 (57 aa).

2 consecutive transmembrane segments (helical) span residues 4 to 24 (WAIIFFVISVIAGLLGFTGVA) and 37 to 57 (IALAIFLIVLVFGVLLGVLVF).

Belongs to the UPF0391 family.

It localises to the cell membrane. The protein is UPF0391 membrane protein AZOSEA39630 of Aromatoleum aromaticum (strain DSM 19018 / LMG 30748 / EbN1) (Azoarcus sp. (strain EbN1)).